The following is a 631-amino-acid chain: ATP-dependent protease PrkA (631 aa).

Phosphothreonine is present on threonine 217. Serine 219 is subject to Phosphoserine.

The protein belongs to the PrkA family. Post-translationally, phosphorylated by PrkC on two sites, Thr-217 and Ser-219, with the threonine being the major site of modification.

The protein resides in the forespore. The protein localises to the spore coat. It catalyses the reaction Hydrolysis of proteins in presence of ATP.. Its activity is regulated as follows. Hydrolase activity is regulated by phosphorylation by the Ser/Thr kinase PrkC, probably allowing fine control of sporulation. Phosphorylation by PrkC does not prevent ATP fixation but it inhibits specifically PrkA protease activity and down-regulates the sporulation processes. Hydrolase activity is inhibited by a protease inhibitor, phenylmethylsulfonyl fluoride (PMSF). Potential kinase activity requires the presence of MgCl(2) and is inhibited in the presence of MnCl(2). Its function is as follows. ATP-dependent protease that regulates sporulation. Is able to bind and hydrolyze ATP. This ATP-dependent protease activity is necessary for efficient sporulation of B.subtilis. In vitro, can hydrolyze alpha-casein, an exogenous substrate of Lon proteases, in an ATP-dependent manner. PrkA also modulates sporulation by negatively regulating the transcriptional regulator Hpr/ScoC to induce the expression of sigK. The control of sporulation mediated via the Hpr/ScoC regulator is probably indirect. PrkA was originally thought to be a protein kinase, as it has been shown to phosphorylate in vitro an unidentified 60 kDa protein from B.subtilis crude extracts at a serine residue. However, Zhang et al. did not observe autophosphorylation or kinase activity for this protein, suggesting that it may have lost its kinase activity during evolution or may be a pseudokinase. The polypeptide is ATP-dependent protease PrkA (Bacillus subtilis (strain 168)).